Consider the following 95-residue polypeptide: Small ribosomal subunit protein bS18 (95 aa).

It belongs to the bacterial ribosomal protein bS18 family. Part of the 30S ribosomal subunit. Forms a tight heterodimer with protein bS6.

Its function is as follows. Binds as a heterodimer with protein bS6 to the central domain of the 16S rRNA, where it helps stabilize the platform of the 30S subunit. The polypeptide is Small ribosomal subunit protein bS18 (Rickettsia felis (strain ATCC VR-1525 / URRWXCal2) (Rickettsia azadi)).